We begin with the raw amino-acid sequence, 757 residues long: Primary amine oxidase (757 aa).

A signal peptide spans 1–30; it reads MGSPSLYSARKTTLALAVALSFAWQAPVFA. Substrate-binding positions include 411–422 and 493–498; these read YLDSGDYGMGTL and VGNYDY. Asp413 functions as the Proton acceptor in the catalytic mechanism. Tyr496 (schiff-base intermediate with substrate; via topaquinone) is an active-site residue. Tyr496 is subject to 2',4',5'-topaquinone. 2 residues coordinate Cu cation: His554 and His556. Asp563, Leu564, Asp565, Glu603, Tyr697, Asp700, Glu702, Asp708, and Ala709 together coordinate Ca(2+). Asp563 is a binding site for Mn(2+). Residue Asp565 participates in Mn(2+) binding. The interval 680-701 is disordered; the sequence is PEGKYPNRSTHDTGLGQYSKDN. Asp708 provides a ligand contact to Mn(2+). His719 is a Cu cation binding site.

The protein belongs to the copper/topaquinone oxidase family. Homodimer. The cofactor is Cu cation. Requires Zn(2+) as cofactor. It depends on Ca(2+) as a cofactor. L-topaquinone serves as cofactor. Mn(2+) is required as a cofactor. In terms of processing, topaquinone (TPQ) is generated by copper-dependent autoxidation of a specific tyrosyl residue.

It is found in the periplasm. It carries out the reaction a primary methyl amine + O2 + H2O = an aldehyde + H2O2 + NH4(+). It catalyses the reaction 2-phenylethylamine + O2 + H2O = 2-phenylacetaldehyde + H2O2 + NH4(+). Its pathway is amino-acid degradation; L-phenylalanine degradation; phenylacetate from L-phenylalanine: step 2/3. Its activity is regulated as follows. Inhibited by 2-hydrazinopyridine. The enzyme prefers aromatic over aliphatic amines. The sequence is that of Primary amine oxidase (tynA) from Escherichia coli (strain K12).